We begin with the raw amino-acid sequence, 510 residues long: NAD(P)H-quinone oxidoreductase subunit 2, chloroplastic (510 aa).

13 helical membrane passes run 24 to 44, 59 to 79, 99 to 119, 124 to 144, 149 to 169, 183 to 203, 229 to 249, 295 to 315, 323 to 343, 354 to 374, 395 to 415, 418 to 438, and 484 to 504; these read LLLFHGSFIFPECILIFGLIL, WFYFISSTSLVMSITALLFRW, IFQFLILLCSTLCIPLSVEYI, MAITEFLLFVLTATLGGMFLC, LITIFVAPECFSLCSYLLSGY, YLLMGGASSSILVHGFSWLYG, ISIALISITVGIGFKLSPAPF, WHLLLEILAILSMILGNLIAI, MLAYSSIGQIGYVIIGIIVGD, YMLFYISMNLGTFACIVSFGL, ALSLALCLLSLGGLPPLAGFF, LYLFWCGWQAGLYFLVSMGLL, and MTVCVIASTIPGISMNPILAI.

The protein belongs to the complex I subunit 2 family. NDH is composed of at least 16 different subunits, 5 of which are encoded in the nucleus.

It is found in the plastid. It localises to the chloroplast thylakoid membrane. The enzyme catalyses a plastoquinone + NADH + (n+1) H(+)(in) = a plastoquinol + NAD(+) + n H(+)(out). The catalysed reaction is a plastoquinone + NADPH + (n+1) H(+)(in) = a plastoquinol + NADP(+) + n H(+)(out). In terms of biological role, NDH shuttles electrons from NAD(P)H:plastoquinone, via FMN and iron-sulfur (Fe-S) centers, to quinones in the photosynthetic chain and possibly in a chloroplast respiratory chain. The immediate electron acceptor for the enzyme in this species is believed to be plastoquinone. Couples the redox reaction to proton translocation, and thus conserves the redox energy in a proton gradient. This chain is NAD(P)H-quinone oxidoreductase subunit 2, chloroplastic, found in Sisyrinchium montanum (Strict blue-eyed grass).